The sequence spans 780 residues: Protein phosphatase 1 regulatory subunit 21 (780 aa).

Coiled coils occupy residues 1–207 (MASA…LKTL) and 556–607 (ESRE…LKNT). The disordered stretch occupies residues 84 to 104 (EPRGKKNKKSGESSSQLSQEQ). The span at 95–104 (ESSSQLSQEQ) shows a compositional bias: low complexity. Thr-652 carries the post-translational modification Phosphothreonine. A coiled-coil region spans residues 693–742 (YAECRALSKRLALAEKSKEALTEEMKLASQNISRLQDELTTTKRSYEDQL). The segment at 760–780 (REEIDTLKMSSKGNSKKNKSR) is disordered.

In terms of assembly, component of the FERRY complex, composed of five subunits: TBCK, PPP1R21, FERRY3, CRYZL1 and GATAD1, with a ratio of 1:2:1:2:4 respectively. PPP1R21 serves as a binding hub connecting all five complex subunits to mediate the binding to specific mitochondrial mRNAs. Interacts with the GTP-bound form of RAB5A (via its C-terminal region); linking the mRNP complex onto trafficking endosomes for active mRNA transport. Interacts with PPP1CA.

It is found in the early endosome. In terms of biological role, component of the FERRY complex (Five-subunit Endosomal Rab5 and RNA/ribosome intermediary). The FERRY complex directly interacts with mRNAs and RAB5A, and functions as a RAB5A effector involved in the localization and the distribution of specific mRNAs most likely by mediating their endosomal transport. The complex recruits mRNAs and ribosomes to early endosomes through direct mRNA-interaction. In the complex, PPP1R21 serves as a binding hub connecting all five complex subunits and mediating the binding to mRNA and early endosomes via RAB5A. Putative regulator of protein phosphatase 1 (PP1) activity. May play a role in the endosomal sorting process or in endosome maturation pathway. In Homo sapiens (Human), this protein is Protein phosphatase 1 regulatory subunit 21 (PPP1R21).